The sequence spans 502 residues: Probable cytosol aminopeptidase (502 aa).

Mn(2+) contacts are provided by lysine 267 and aspartate 272. Lysine 279 is an active-site residue. Aspartate 290, aspartate 349, and glutamate 351 together coordinate Mn(2+). The active site involves arginine 353.

The protein belongs to the peptidase M17 family. Mn(2+) is required as a cofactor.

It is found in the cytoplasm. It carries out the reaction Release of an N-terminal amino acid, Xaa-|-Yaa-, in which Xaa is preferably Leu, but may be other amino acids including Pro although not Arg or Lys, and Yaa may be Pro. Amino acid amides and methyl esters are also readily hydrolyzed, but rates on arylamides are exceedingly low.. The enzyme catalyses Release of an N-terminal amino acid, preferentially leucine, but not glutamic or aspartic acids.. Functionally, presumably involved in the processing and regular turnover of intracellular proteins. Catalyzes the removal of unsubstituted N-terminal amino acids from various peptides. In Aeromonas salmonicida (strain A449), this protein is Probable cytosol aminopeptidase.